Consider the following 554-residue polypeptide: CTP synthase (554 aa).

Residues 1–265 (MTPLIFVTGG…DEIVVNQLKL (265 aa)) form an amidoligase domain region. A CTP-binding site is contributed by Ser-13. Residue Ser-13 participates in UTP binding. ATP contacts are provided by residues 14-19 (SLGKGI) and Asp-71. Positions 71 and 139 each coordinate Mg(2+). CTP is bound by residues 146–148 (DIE), 186–191 (KTKPTQ), and Lys-222. Residues 186–191 (KTKPTQ) and Lys-222 contribute to the UTP site. In terms of domain architecture, Glutamine amidotransferase type-1 spans 292 to 545 (TIAVVGKYVD…IRAARERKAG (254 aa)). Position 353 (Gly-353) interacts with L-glutamine. Residue Cys-380 is the Nucleophile; for glutamine hydrolysis of the active site. L-glutamine is bound by residues 381–384 (YGMQ), Glu-404, and Arg-471. Catalysis depends on residues His-518 and Glu-520.

It belongs to the CTP synthase family. In terms of assembly, homotetramer.

The enzyme catalyses UTP + L-glutamine + ATP + H2O = CTP + L-glutamate + ADP + phosphate + 2 H(+). It catalyses the reaction L-glutamine + H2O = L-glutamate + NH4(+). It carries out the reaction UTP + NH4(+) + ATP = CTP + ADP + phosphate + 2 H(+). It functions in the pathway pyrimidine metabolism; CTP biosynthesis via de novo pathway; CTP from UDP: step 2/2. With respect to regulation, allosterically activated by GTP, when glutamine is the substrate; GTP has no effect on the reaction when ammonia is the substrate. The allosteric effector GTP functions by stabilizing the protein conformation that binds the tetrahedral intermediate(s) formed during glutamine hydrolysis. Inhibited by the product CTP, via allosteric rather than competitive inhibition. Its function is as follows. Catalyzes the ATP-dependent amination of UTP to CTP with either L-glutamine or ammonia as the source of nitrogen. Regulates intracellular CTP levels through interactions with the four ribonucleotide triphosphates. The protein is CTP synthase of Stenotrophomonas maltophilia (strain R551-3).